Reading from the N-terminus, the 157-residue chain is NudC domain-containing protein 2 (157 aa).

Serine 2 carries the N-acetylserine modification. Residues 14 to 104 (CGTPWGQWYQ…DAANCWTSLL (91 aa)) form the CS domain. The interval 134-157 (FDFSGAEISGNYTKGGPDFSNLEK) is disordered. The residue at position 142 (serine 142) is a Phosphoserine. Tyrosine 145 carries the phosphotyrosine modification.

In terms of assembly, interacts with LIS1.

It localises to the chromosome. Its subcellular location is the centromere. The protein resides in the kinetochore. The protein localises to the cytoplasm. It is found in the cytoskeleton. It localises to the microtubule organizing center. Its subcellular location is the centrosome. The protein resides in the spindle pole. Its function is as follows. May regulate the LIS1/dynein pathway by stabilizing LIS1 with Hsp90 chaperone. This is NudC domain-containing protein 2 (NUDCD2) from Homo sapiens (Human).